Reading from the N-terminus, the 180-residue chain is ADP-ribosylation factor 1 (180 aa).

Residue G2 is the site of N-myristoyl glycine attachment. Residues 24-31 (GLDAAGKT), 67-71 (DVGGQ), and 126-129 (NKQD) contribute to the GTP site.

The protein belongs to the small GTPase superfamily. Arf family.

Its subcellular location is the golgi apparatus. It carries out the reaction GTP + H2O = GDP + phosphate + H(+). GTP-binding protein involved in protein trafficking; may modulate vesicle budding and uncoating within the Golgi apparatus. The sequence is that of ADP-ribosylation factor 1 (arf1) from Schizosaccharomyces pombe (strain 972 / ATCC 24843) (Fission yeast).